A 1219-amino-acid polypeptide reads, in one-letter code: MESSSPSSAEFDVFLSFRGFDTRNNFTGHLQKALRLRGIDSFIDDRLRRGDNLTALFDRIEKSKIAIIVFSTNYANSAWCLRELVKILECRNSNQQLVVPIFYKVDKSDVEKQRNSFAVPFKLPELTFPGVTPEEISSWKAALASASNILGYVVKEISTSEAKLVDEIAVDTFKKLNDLAPSGNEGLVGIESRLKNLEKLLSWEDLDTVHIIGIVGMVGIGKTTLADCLYGRMRGQFDGSCFLTNIRENSGRSGLESLLQKLFSTVLNDRDLEIGAPGNAHERFERRLKSKRLLIVLDDVNDEKQIRYLMGHCKWYQGGSRIIITTRDSKLIETIKGRKYVLPKLNDREALKLFSLNAFSNSFPLKEFEGLTNMVLDYAKGHPLALKVLGSDLCERDDLYWEAKLDRLKSRSHGDIYEVLETSYEELTTEQKNVFLDIACFFRSENVDYVTSLLNSHGVDVSGVVKDLVDKCLITLSDNRIEMHDMLQTMAKEISLKVETIGIRDCRWLSRHGNQCQWHIRLWDSEDICDLLTEGLGTDKIRGIFLDTSKLRAMRLSAKAFQGMYNLKYLKIYDSHCSRGCEAEFKLHLRRGLSFLPNELTYLHWHGYPLQSIPLDFDPKNLVDLKLPHSQLEEIWDDEKDVGMLKWVDLSHSINLRQCLGLANAHNLERLNLEGCTSLKKLPSTINCLEKLIYLNLRDCTSLRSLPKGIKTQSLQTLILSGCSSLKKFPLISENVEVLLLDGTVIKSLPESIQTFRRLALLNLKNCKKLKHLSSDLYKLKCLQELILSGCSQLEVFPEIKEDMESLEILLMDDTSITEMPKMMHLSNIKTFSLCGTSSHVSVSMFFMPPTLGCSRLTDLYLSRCSLYKLPDNIGGLSSLQSLCLSGNNIENLPESFNQLNNLKWFDLKFCKMLKSLPVLPQNLQYLDAHECESLETLANPLTPLTVGERIHSMFIFSNCYKLNQDAQASLVGHARIKSQLMANASAKRYYRGFVPEPLVGICYPATEIPSWFCHQRLGRSLEIPLPPHWCDINFVGLALSVVVSFKDYEDSAKRFSVKCCGNFENKDSSFTRFDFTLAGWNEPCGSLSHESRKLTSDHVFMGYNSCFLVKNVHGESNSCCYTKASFEFYVTDDETRKKIETCEVIKCGMSLMYVPEDDDCMLLKKTNIVQLSLKSGPSCSYDLDDVMDDVRPKRGLCQFVGGEEPGCKRRKEEKITVR.

The 168-residue stretch at 9 to 176 (AEFDVFLSFR…EIAVDTFKKL (168 aa)) folds into the TIR domain. The active site involves E83. Residues 197–446 (LEKLLSWEDL…DIACFFRSEN (250 aa)) enclose the NB-ARC domain. 216-222 (GMVGIGK) provides a ligand contact to ATP. LRR repeat units follow at residues 468–493 (LVDK…MAKE), 538–563 (TDKI…AFQG), 597–619 (PNEL…DFDP), 620–642 (KNLV…EKDV), 665–689 (AHNL…INCL), 690–713 (EKLI…IKTQ), 733–757 (SENV…QTFR), 759–780 (LALL…LYKL), 804–827 (MESL…MHLS), 854–877 (CSRL…IGGL), and 878–899 (SSLQ…SFNQ).

It belongs to the disease resistance NB-LRR family. As to quaternary structure, interacts with CAMTA3 and DSC2.

The catalysed reaction is NAD(+) + H2O = ADP-D-ribose + nicotinamide + H(+). Functionally, TIR-NB-LRR receptor-like protein involved in plant defense. Acts as a trigger of hypersensitive response (HR). Functions as a guard of CAMTA3, a negative regulator of immunity, during pathogen infection. The protein is Disease resistance-like protein DSC1 of Arabidopsis thaliana (Mouse-ear cress).